Here is a 544-residue protein sequence, read N- to C-terminus: Exodeoxyribonuclease 7 large subunit (544 aa).

Positions Pro522–Leu544 are disordered.

Belongs to the XseA family. Heterooligomer composed of large and small subunits.

It localises to the cytoplasm. It catalyses the reaction Exonucleolytic cleavage in either 5'- to 3'- or 3'- to 5'-direction to yield nucleoside 5'-phosphates.. Functionally, bidirectionally degrades single-stranded DNA into large acid-insoluble oligonucleotides, which are then degraded further into small acid-soluble oligonucleotides. The protein is Exodeoxyribonuclease 7 large subunit of Zymomonas mobilis subsp. mobilis (strain ATCC 31821 / ZM4 / CP4).